A 223-amino-acid polypeptide reads, in one-letter code: Ribonuclease 3 (223 aa).

The 124-residue stretch at L4–G127 folds into the RNase III domain. E40 lines the Mg(2+) pocket. D44 is a catalytic residue. Mg(2+) contacts are provided by D113 and E116. Residue E116 is part of the active site. The region spanning D154 to K223 is the DRBM domain.

This sequence belongs to the ribonuclease III family. As to quaternary structure, homodimer. It depends on Mg(2+) as a cofactor.

Its subcellular location is the cytoplasm. It catalyses the reaction Endonucleolytic cleavage to 5'-phosphomonoester.. In terms of biological role, digests double-stranded RNA. Involved in the processing of primary rRNA transcript to yield the immediate precursors to the large and small rRNAs (23S and 16S). Processes some mRNAs, and tRNAs when they are encoded in the rRNA operon. Processes pre-crRNA and tracrRNA of type II CRISPR loci if present in the organism. This chain is Ribonuclease 3, found in Campylobacter concisus (strain 13826).